Reading from the N-terminus, the 219-residue chain is METVLNSCEIRVLGCLVEKELATPEYYPLTLNALTAACNQKSNRDPVMALEDADVVRALDSLRMKGFARQSAEGVRAMKYCHCLAEKFLLEPPDLAVLAELLVRGPQTVGELRTRAERMRPFADLAAVEEVLRMLMEREEPLVTRLPRQPGRKEQRYAHLLAGAPEAEGEESMAPPEGARLQVRAENERVARLEEEVTALRAEVAELRRMMEEFRSQFE.

Belongs to the UPF0502 family.

This chain is UPF0502 protein Gmet_0262, found in Geobacter metallireducens (strain ATCC 53774 / DSM 7210 / GS-15).